Consider the following 397-residue polypeptide: S-layer protein B (397 aa).

Positions 1–24 are cleaved as a signal peptide; sequence MVVKKTFVLSTLILISVVALVSTA. Positions 259–314 form a coiled coil; sequence INALNNEVSTLRSEISSLNSTIASLNKSLANANTQISNLQSEITTLNSEIGKLNST. Residues 373–393 form a helical membrane-spanning segment; the sequence is GGIIAGIIGLIVAIVAIVLVM.

This sequence belongs to the Sulfolobales SlaB family. In terms of assembly, the mushroom-shaped unit cells of the Sulfolobales' S-layers may consist of three SlaB subunits and six SlaA subunits.

It localises to the secreted. The protein resides in the cell wall. Its subcellular location is the S-layer. It is found in the cell membrane. In terms of biological role, S-layer small protein. May anchor the complex to the cell membrane. The polypeptide is S-layer protein B (Saccharolobus solfataricus (strain ATCC 35092 / DSM 1617 / JCM 11322 / P2) (Sulfolobus solfataricus)).